Here is a 100-residue protein sequence, read N- to C-terminus: UPF0251 protein VVA1436 (100 aa).

It belongs to the UPF0251 family.

This is UPF0251 protein VVA1436 from Vibrio vulnificus (strain YJ016).